A 271-amino-acid chain; its full sequence is Chymotrypsin BII (271 aa).

The signal sequence occupies residues 1-15; that stretch reads MIGKLSLLLVCVAVA. Residues 16 to 45 constitute a propeptide, activation peptide; sequence SGNPAAGKPWHWKSPKPLVDPRIHVNATPR. The Peptidase S1 domain maps to 46–268; it reads IVGGVEATPH…YLDWIEQKTG (223 aa). Cys71 and Cys87 are oxidised to a cystine. Catalysis depends on charge relay system residues His86 and Asp132. 2 disulfide bridges follow: Cys196–Cys209 and Cys219–Cys245. Ser223 serves as the catalytic Charge relay system.

This sequence belongs to the peptidase S1 family.

The protein localises to the secreted. It is found in the extracellular space. The catalysed reaction is Preferential cleavage: Tyr-|-Xaa, Trp-|-Xaa, Phe-|-Xaa, Leu-|-Xaa.. Functionally, serine protease with chymotryptic and collagenolytic activities. The protein is Chymotrypsin BII of Penaeus vannamei (Whiteleg shrimp).